Reading from the N-terminus, the 678-residue chain is Geranylgeranyl transferase type-2 subunit alpha 1 (678 aa).

5 PFTA repeats span residues 40–74 (YTNE…DRLA), 86–120 (ILDE…KGHS), 121–155 (SVGN…LTNR), 156–190 (SEQD…SLLA), and 201–235 (KIPE…QTLN). LRR repeat units follow at residues 510–532 (MNNL…VEKL), 533–554 (LFVQ…LEAM), 555–578 (QLLS…SLRH), 580–604 (KQLK…RYLC), and 638–663 (DLNL…VLQV).

The protein belongs to the protein prenyltransferase subunit alpha family. As to quaternary structure, heterotrimer composed of the alpha subunit RGTA, the beta subunit RGTB and REP; within this trimer, RGTA and RGTB form the catalytic component, while REP mediates peptide substrate binding.

It catalyses the reaction geranylgeranyl diphosphate + L-cysteinyl-[protein] = S-geranylgeranyl-L-cysteinyl-[protein] + diphosphate. Its activity is regulated as follows. The enzymatic reaction requires the aid of the Rab escort protein REP. Its function is as follows. Catalyzes the transfer of a geranylgeranyl moiety from geranylgeranyl diphosphate to both cysteines of Rab proteins with the C-terminal sequence -CCXX, CXXX, -XCCX and -XCXC, such as RABA1A, RABA2A, RABF2A and RABG2. In vitro, can prenylate PGGTI targets with the C-terminal Cys-aliphatic-aliphatic-X (CaaX) with leucine in the terminal position. Substrates with the C-terminal sequence -CSIL such as ARAC11/ROP1 or GG2/AGG2 are prenylated independently of REP and when the alpha subunit is associated with a beta subunit (RGTB1 or RGTB2). The chain is Geranylgeranyl transferase type-2 subunit alpha 1 from Arabidopsis thaliana (Mouse-ear cress).